Reading from the N-terminus, the 723-residue chain is 1,3-beta-galactosyl-N-acetylhexosamine phosphorylase Cphy0577 (723 aa).

The Proton donor role is filled by Asp317.

Belongs to the glycoside hydrolase 112 family.

It catalyses the reaction beta-D-galactosyl-(1-&gt;3)-N-acetyl-D-glucosamine + phosphate = alpha-D-galactose 1-phosphate + N-acetyl-D-glucosamine. Its function is as follows. Reversibly phosphorolyzes beta-D-galactopyranosyl-(1-&gt;3)-N-acetyl-D-glucosamine to form alpha-D-galactopyranose 1-phosphate and acetyl-D-glucosamine. Active towards galacto-N-biose and lacto-N-biose. Does not phosphorolyze galacto-N-tetraose or lacto-N-tetraose. In the reverse reaction has activity toward N-acetyl-D-glucosamine and N-acetyl-D-galactosamine, but not L-rhamnose, D-glucose or D-galactose. This is 1,3-beta-galactosyl-N-acetylhexosamine phosphorylase Cphy0577 from Lachnoclostridium phytofermentans (strain ATCC 700394 / DSM 18823 / ISDg) (Clostridium phytofermentans).